The chain runs to 348 residues: Anthranilate phosphoribosyltransferase (348 aa).

Residues Gly-87, 90 to 91 (GD), Thr-95, 97 to 100 (NIST), 115 to 123 (KHGNRSASG), and Ser-127 contribute to the 5-phospho-alpha-D-ribose 1-diphosphate site. Gly-87 contributes to the anthranilate binding site. Ser-99 contacts Mg(2+). Asn-118 contacts anthranilate. An anthranilate-binding site is contributed by Arg-173. Mg(2+) is bound by residues Asp-232 and Glu-233.

Belongs to the anthranilate phosphoribosyltransferase family. In terms of assembly, homodimer. Mg(2+) is required as a cofactor.

The enzyme catalyses N-(5-phospho-beta-D-ribosyl)anthranilate + diphosphate = 5-phospho-alpha-D-ribose 1-diphosphate + anthranilate. It participates in amino-acid biosynthesis; L-tryptophan biosynthesis; L-tryptophan from chorismate: step 2/5. Functionally, catalyzes the transfer of the phosphoribosyl group of 5-phosphorylribose-1-pyrophosphate (PRPP) to anthranilate to yield N-(5'-phosphoribosyl)-anthranilate (PRA). The sequence is that of Anthranilate phosphoribosyltransferase from Synechococcus sp. (strain CC9311).